Here is a 285-residue protein sequence, read N- to C-terminus: 3',5'-nucleoside bisphosphate phosphatase (285 aa).

The Mn(2+) site is built by histidine 7, histidine 9, aspartate 14, histidine 39, glutamate 64, and histidine 75. Aspartate 14 and histidine 39 together coordinate substrate. Substrate is bound by residues 99 to 102 and 134 to 135; these read RLER and RT. The Mn(2+) site is built by histidine 191, aspartate 248, and histidine 250. A substrate-binding site is contributed by histidine 250.

Belongs to the PHP family. As to quaternary structure, monomer. Mn(2+) serves as cofactor.

The catalysed reaction is a ribonucleoside 3',5'-bisphosphate + H2O = a ribonucleoside 5'-phosphate + phosphate. Its function is as follows. Hydrolyzes 3',5'-bisphosphonucleosides (pGp, pCp, pUp, and pIp) to nucleoside 5'-phosphate and orthophosphate. Has similar catalytic efficiencies with all the bases. Also shows activity with ribonucleoside 2'-deoxyribonucleoside 3',5'-bisphosphates. Does not show activity with nucleoside 2',5'-bisphosphates. This chain is 3',5'-nucleoside bisphosphate phosphatase, found in Chromobacterium violaceum (strain ATCC 12472 / DSM 30191 / JCM 1249 / CCUG 213 / NBRC 12614 / NCIMB 9131 / NCTC 9757 / MK).